The following is a 189-amino-acid chain: Protein Flattop (189 aa).

The tract at residues Glu112–Lys189 is disordered. The span at Ala137 to Val148 shows a compositional bias: polar residues. The span at Asn178–Lys189 shows a compositional bias: pro residues.

The protein belongs to the Flattop family. In terms of assembly, microtubule inner protein component of sperm flagellar doublet microtubules. Interacts with DLG3. In terms of tissue distribution, expressed in mono- and multiciliated tissues during planar cell polarity acquisition.

The protein resides in the cytoplasm. It localises to the cytoskeleton. It is found in the cilium basal body. Its subcellular location is the cilium axoneme. The protein localises to the flagellum axoneme. The protein resides in the apical cell membrane. Microtubule inner protein (MIP) part of the dynein-decorated doublet microtubules (DMTs) in cilia axoneme. Acts as a regulator of cilium basal body docking and positioning in mono- and multiciliated cells. Regulates basal body docking and cilia formation in multiciliated lung cells. Regulates kinocilium positioning and stereocilia bundle morphogenesis in the inner ear. This chain is Protein Flattop, found in Mus musculus (Mouse).